A 449-amino-acid chain; its full sequence is Glucose-6-phosphate isomerase (449 aa).

The active-site Proton donor is glutamate 291. Catalysis depends on residues histidine 312 and lysine 426.

This sequence belongs to the GPI family.

The protein resides in the cytoplasm. It catalyses the reaction alpha-D-glucose 6-phosphate = beta-D-fructose 6-phosphate. It participates in carbohydrate biosynthesis; gluconeogenesis. Its pathway is carbohydrate degradation; glycolysis; D-glyceraldehyde 3-phosphate and glycerone phosphate from D-glucose: step 2/4. Its function is as follows. Catalyzes the reversible isomerization of glucose-6-phosphate to fructose-6-phosphate. This is Glucose-6-phosphate isomerase from Streptococcus pyogenes serotype M28 (strain MGAS6180).